A 239-amino-acid polypeptide reads, in one-letter code: 1-(5-phosphoribosyl)-5-[(5-phosphoribosylamino)methylideneamino] imidazole-4-carboxamide isomerase (239 aa).

Asp-8 serves as the catalytic Proton acceptor. The active-site Proton donor is the Asp-129.

Belongs to the HisA/HisF family.

The protein localises to the cytoplasm. The catalysed reaction is 1-(5-phospho-beta-D-ribosyl)-5-[(5-phospho-beta-D-ribosylamino)methylideneamino]imidazole-4-carboxamide = 5-[(5-phospho-1-deoxy-D-ribulos-1-ylimino)methylamino]-1-(5-phospho-beta-D-ribosyl)imidazole-4-carboxamide. The protein operates within amino-acid biosynthesis; L-histidine biosynthesis; L-histidine from 5-phospho-alpha-D-ribose 1-diphosphate: step 4/9. The chain is 1-(5-phosphoribosyl)-5-[(5-phosphoribosylamino)methylideneamino] imidazole-4-carboxamide isomerase from Pelagibacter ubique (strain HTCC1062).